A 132-amino-acid polypeptide reads, in one-letter code: uncharacterized protein (132 aa).

Lys-59 participates in a covalent cross-link: Glycyl lysine isopeptide (Lys-Gly) (interchain with G-Cter in SAMP2).

It belongs to the OsmC/Ohr family.

This is an uncharacterized protein from Haloferax volcanii (strain ATCC 29605 / DSM 3757 / JCM 8879 / NBRC 14742 / NCIMB 2012 / VKM B-1768 / DS2) (Halobacterium volcanii).